Consider the following 319-residue polypeptide: MEPGPALEHIPVMLEQALELLACRRGGVYVDGTVGGGGYSEAILRASAPDGILLGVDWDAEAIGRAAGRLSAYGRRAILTKAGFAELPEVLPRHGFAQVDGIVLDLGVSAFQIDDAARGFSFTKDGPLDMRMDPGLPQTAADMVNTLPEKDLADLIFRLGEERWSRRIARAVVERRRERPFQRTLELADTVAATVPATRDSRRIHPATRTFLALRLAVNQELESLERFLSGALDLLKTGGRLCVVSFHSLEDRMVKGQFKEWAKSCRCPREAVLCRCEGRPLVRLLTRKAVRPDEREKERNPRSRSARLRAVEKQGVPA.

S-adenosyl-L-methionine contacts are provided by residues 37 to 39, D57, F96, D105, and Q112; that span reads GGY. Residues 292 to 302 show a composition bias toward basic and acidic residues; it reads RPDEREKERNP. The interval 292–319 is disordered; the sequence is RPDEREKERNPRSRSARLRAVEKQGVPA.

It belongs to the methyltransferase superfamily. RsmH family.

It is found in the cytoplasm. It carries out the reaction cytidine(1402) in 16S rRNA + S-adenosyl-L-methionine = N(4)-methylcytidine(1402) in 16S rRNA + S-adenosyl-L-homocysteine + H(+). In terms of biological role, specifically methylates the N4 position of cytidine in position 1402 (C1402) of 16S rRNA. The sequence is that of Ribosomal RNA small subunit methyltransferase H from Syntrophobacter fumaroxidans (strain DSM 10017 / MPOB).